Reading from the N-terminus, the 488-residue chain is NADH-ubiquinone oxidoreductase chain 2 (488 aa).

14 consecutive transmembrane segments (helical) span residues 4–24 (LFLA…LLIH), 45–65 (WLGL…APLL), 84–104 (FCQI…FDFF), 111–131 (AFEF…MISA), 134–154 (LIAM…LAAS), 168–188 (YLIL…MIYG), 215–235 (IFMG…AVPF), 252–272 (AFLS…VFIY), 282–302 (IFFF…MAQT), 308–328 (LAYS…CGTI), 334–354 (LLIG…IVLA), 375–395 (ILAI…PLAG), 400–420 (FYLF…VGVV), and 456–476 (LLLA…SPLF).

It belongs to the complex I subunit 2 family.

It is found in the mitochondrion inner membrane. It catalyses the reaction a ubiquinone + NADH + 5 H(+)(in) = a ubiquinol + NAD(+) + 4 H(+)(out). Functionally, core subunit of the mitochondrial membrane respiratory chain NADH dehydrogenase (Complex I) that is believed to belong to the minimal assembly required for catalysis. Complex I functions in the transfer of electrons from NADH to the respiratory chain. The immediate electron acceptor for the enzyme is believed to be ubiquinone. This Oenothera berteroana (Bertero's evening primrose) protein is NADH-ubiquinone oxidoreductase chain 2 (ND2).